Consider the following 216-residue polypeptide: Elongation factor Ts (216 aa).

The involved in Mg(2+) ion dislocation from EF-Tu stretch occupies residues T81 to V84.

The protein belongs to the EF-Ts family.

It is found in the cytoplasm. In terms of biological role, associates with the EF-Tu.GDP complex and induces the exchange of GDP to GTP. It remains bound to the aminoacyl-tRNA.EF-Tu.GTP complex up to the GTP hydrolysis stage on the ribosome. The protein is Elongation factor Ts of Geotalea uraniireducens (strain Rf4) (Geobacter uraniireducens).